A 481-amino-acid chain; its full sequence is Delta 4,5-hexuronate-2-O-sulfatase (481 aa).

S64 is subject to 3-oxoalanine (Ser). Positions 225, 226, 462, and 469 each coordinate Zn(2+). A disordered region spans residues 453 to 481; it reads VDADPRCRNHTPGYPSHEGPGAREILKRK. Over residues 472–481 the composition is skewed to basic and acidic residues; the sequence is PGAREILKRK.

The protein belongs to the sulfatase family. Zn(2+) serves as cofactor. The conversion to 3-oxoalanine (also known as C-formylglycine, FGly), of a serine or cysteine residue in prokaryotes and of a cysteine residue in eukaryotes, is critical for catalytic activity.

Exosulfatase involved in the degradation of the glycosaminoglycans (GAGs) chondroitin sulfate (CS), dermatan sulfate (DS) and heparan sulfate (HS). 2-O-sulfatase active on unsaturated non-reducing end hexuronate units. Has a slight preference for HS-derived structures. GAG-specific sulfatases play a key role in the persistence of the major human gut symbiont B.thetaiotaomicron in the host gastrointestinal tract. This is Delta 4,5-hexuronate-2-O-sulfatase from Bacteroides thetaiotaomicron (strain ATCC 29148 / DSM 2079 / JCM 5827 / CCUG 10774 / NCTC 10582 / VPI-5482 / E50).